The primary structure comprises 114 residues: UPF0102 protein HPG27_782 (114 aa).

It belongs to the UPF0102 family.

This is UPF0102 protein HPG27_782 from Helicobacter pylori (strain G27).